Here is a 271-residue protein sequence, read N- to C-terminus: Type III pantothenate kinase (271 aa).

Residue 6-13 (DVRNTNIV) participates in ATP binding. 109 to 112 (GADR) contributes to the substrate binding site. Aspartate 111 functions as the Proton acceptor in the catalytic mechanism. Aspartate 131 is a binding site for K(+). Threonine 134 contributes to the ATP binding site. Threonine 186 lines the substrate pocket.

It belongs to the type III pantothenate kinase family. As to quaternary structure, homodimer. NH4(+) serves as cofactor. Requires K(+) as cofactor.

It localises to the cytoplasm. It catalyses the reaction (R)-pantothenate + ATP = (R)-4'-phosphopantothenate + ADP + H(+). The protein operates within cofactor biosynthesis; coenzyme A biosynthesis; CoA from (R)-pantothenate: step 1/5. Its function is as follows. Catalyzes the phosphorylation of pantothenate (Pan), the first step in CoA biosynthesis. The polypeptide is Type III pantothenate kinase (Rhodococcus erythropolis (strain PR4 / NBRC 100887)).